The primary structure comprises 813 residues: Leucine--tRNA ligase (813 aa).

The short motif at 40-51 is the 'HIGH' region element; sequence SYPSGSKLHAGH. The short motif at 572–576 is the 'KMSKS' region element; that stretch reads KMSKS. Position 575 (lysine 575) interacts with ATP.

Belongs to the class-I aminoacyl-tRNA synthetase family.

The protein resides in the cytoplasm. It carries out the reaction tRNA(Leu) + L-leucine + ATP = L-leucyl-tRNA(Leu) + AMP + diphosphate. This is Leucine--tRNA ligase from Clostridium botulinum (strain Langeland / NCTC 10281 / Type F).